Here is a 73-residue protein sequence, read N- to C-terminus: DNA-directed RNA polymerase subunit omega (73 aa).

This sequence belongs to the RNA polymerase subunit omega family. In terms of assembly, the RNAP catalytic core consists of 2 alpha, 1 beta, 1 beta' and 1 omega subunit. When a sigma factor is associated with the core the holoenzyme is formed, which can initiate transcription.

The catalysed reaction is RNA(n) + a ribonucleoside 5'-triphosphate = RNA(n+1) + diphosphate. Its function is as follows. Promotes RNA polymerase assembly. Latches the N- and C-terminal regions of the beta' subunit thereby facilitating its interaction with the beta and alpha subunits. The polypeptide is DNA-directed RNA polymerase subunit omega (Lactobacillus delbrueckii subsp. bulgaricus (strain ATCC BAA-365 / Lb-18)).